The sequence spans 134 residues: MGKDTIADIITSIRNADMNRKGTVRIGSTNITESIVKILLREGFIENVRKHRESNQYFLILTLRHRRNKKESYKTILNLKRISRPGLRIYSNSQRIPRILGGIGIVILSTSQGIMTDREARLKRIGGEILCYIW.

This sequence belongs to the universal ribosomal protein uS8 family. In terms of assembly, part of the 30S ribosomal subunit.

It is found in the plastid. It localises to the chloroplast. Its function is as follows. One of the primary rRNA binding proteins, it binds directly to 16S rRNA central domain where it helps coordinate assembly of the platform of the 30S subunit. The polypeptide is Small ribosomal subunit protein uS8c (rps8) (Capsella bursa-pastoris (Shepherd's purse)).